A 309-amino-acid polypeptide reads, in one-letter code: Epidermal retinol dehydrogenase 2 (309 aa).

The helical transmembrane segment at 11 to 31 threads the bilayer; sequence LLVFLGKSLLSVLEALLFHVI. 44–68 is an NADP(+) binding site; it reads LITGAGSGLGRLLALQFARLGAVLV. Position 177 (Ser-177) interacts with substrate. Tyr-190 acts as the Proton acceptor in catalysis. A helical membrane pass occupies residues 270-290; the sequence is FLYFIVFLKSILPIKTGILIA.

Belongs to the short-chain dehydrogenases/reductases (SDR) family.

Its subcellular location is the endoplasmic reticulum membrane. The enzyme catalyses all-trans-retinol--[retinol-binding protein] + NAD(+) = all-trans-retinal--[retinol-binding protein] + NADH + H(+). Its pathway is cofactor metabolism; retinol metabolism. In terms of biological role, oxidoreductase with strong preference for NAD. Active in both the oxidative and reductive directions. Oxidizes all-trans-retinol in all-trans-retinaldehyde. No activity was detected with 11-cis-retinol or 11-cis-retinaldehyde as substrates with either NAD(+)/NADH or NADP(+)/NADPH. This Mus musculus (Mouse) protein is Epidermal retinol dehydrogenase 2.